The sequence spans 281 residues: MATVTAALVKELRERTGAGMMECKKALVEANADIELAIENMRKSGAAKAAKKAGNVAAEGAIIIKEENGVAALLEVNCQTDFVAKDANFTAFAAEVAAAAVASQATVEELQAQFEETRVALVAKIGENINIRRVQYVAGSALASYRHGEKIGVVVAGEGDAETLKHIAMHVAASKPEYVNPSDVPADVVEKEKAVQVEIAMNEGKPQEIAEKMVIGRMKKFTGEVSLTGQAFIMEPKKTVAEILKEKGASVSNFVRLEVGEGIEKAAEMSFADEVAAVQKG.

Residues 80 to 83 (TDFV) are involved in Mg(2+) ion dislocation from EF-Tu.

The protein belongs to the EF-Ts family.

It is found in the cytoplasm. Functionally, associates with the EF-Tu.GDP complex and induces the exchange of GDP to GTP. It remains bound to the aminoacyl-tRNA.EF-Tu.GTP complex up to the GTP hydrolysis stage on the ribosome. This is Elongation factor Ts from Aliivibrio fischeri (strain MJ11) (Vibrio fischeri).